We begin with the raw amino-acid sequence, 182 residues long: ATP synthase subunit delta (182 aa).

This sequence belongs to the ATPase delta chain family. In terms of assembly, F-type ATPases have 2 components, F(1) - the catalytic core - and F(0) - the membrane proton channel. F(1) has five subunits: alpha(3), beta(3), gamma(1), delta(1), epsilon(1). CF(0) has four main subunits: a(1), b(1), b'(1) and c(10-14). The alpha and beta chains form an alternating ring which encloses part of the gamma chain. F(1) is attached to F(0) by a central stalk formed by the gamma and epsilon chains, while a peripheral stalk is formed by the delta, b and b' chains.

The protein localises to the cellular thylakoid membrane. Its function is as follows. F(1)F(0) ATP synthase produces ATP from ADP in the presence of a proton or sodium gradient. F-type ATPases consist of two structural domains, F(1) containing the extramembraneous catalytic core and F(0) containing the membrane proton channel, linked together by a central stalk and a peripheral stalk. During catalysis, ATP synthesis in the catalytic domain of F(1) is coupled via a rotary mechanism of the central stalk subunits to proton translocation. Functionally, this protein is part of the stalk that links CF(0) to CF(1). It either transmits conformational changes from CF(0) to CF(1) or is implicated in proton conduction. The protein is ATP synthase subunit delta of Trichodesmium erythraeum (strain IMS101).